We begin with the raw amino-acid sequence, 218 residues long: MTRVKVCGLTTERDHAAAVAAGADAVGIIADVPVETPREVSVETATALRAATPPFVTSVLVTMPATPEHAVDLVRTVAPDAVQLHGDLPVGDAAYVAANTPCPVIKAVTAGDQSAARYADVVDALLVDSPPTDDAGAGGGTGRTHDWAATRAFADRVDTPVVLAGGLTPANVADAVDTVDPFAVDVASGVEARPGEKDHAAVSAFVARATATPDPTLT.

The protein belongs to the TrpF family.

The enzyme catalyses N-(5-phospho-beta-D-ribosyl)anthranilate = 1-(2-carboxyphenylamino)-1-deoxy-D-ribulose 5-phosphate. It participates in amino-acid biosynthesis; L-tryptophan biosynthesis; L-tryptophan from chorismate: step 3/5. The protein is N-(5'-phosphoribosyl)anthranilate isomerase of Halobacterium salinarum (strain ATCC 29341 / DSM 671 / R1).